Reading from the N-terminus, the 141-residue chain is Large ribosomal subunit protein uL14 (141 aa).

Belongs to the universal ribosomal protein uL14 family. Part of the 50S ribosomal subunit. Forms a cluster with proteins L3 and L24e, part of which may contact the 16S rRNA in 2 intersubunit bridges.

Its function is as follows. Binds to 23S rRNA. Forms part of two intersubunit bridges in the 70S ribosome. In Thermofilum pendens (strain DSM 2475 / Hrk 5), this protein is Large ribosomal subunit protein uL14.